Reading from the N-terminus, the 256-residue chain is 6-phosphogluconolactonase (256 aa).

Belongs to the glucosamine/galactosamine-6-phosphate isomerase family. 6-phosphogluconolactonase subfamily.

The catalysed reaction is 6-phospho-D-glucono-1,5-lactone + H2O = 6-phospho-D-gluconate + H(+). It participates in carbohydrate degradation; pentose phosphate pathway; D-ribulose 5-phosphate from D-glucose 6-phosphate (oxidative stage): step 2/3. Hydrolysis of 6-phosphogluconolactone to 6-phosphogluconate. The polypeptide is 6-phosphogluconolactonase (pgl) (Chlamydia trachomatis serovar D (strain ATCC VR-885 / DSM 19411 / UW-3/Cx)).